The chain runs to 48 residues: Delta-stichotoxin-She1a (48 aa).

Disulfide bonds link Cys-3-Cys-43, Cys-5-Cys-33, and Cys-26-Cys-44.

This sequence belongs to the sea anemone sodium channel inhibitory toxin family. Type II subfamily.

It localises to the secreted. The protein resides in the nematocyst. Functionally, binds specifically to voltage-gated sodium channels (Nav), thereby delaying their inactivation during signal transduction. Is highly toxic to crabs (by intrahemocoelic injection), but without effect upon mice (by intraperitoneal injection). This is Delta-stichotoxin-She1a from Stichodactyla helianthus (Sun anemone).